Here is a 131-residue protein sequence, read N- to C-terminus: ATP synthase epsilon chain, chloroplastic (131 aa).

It belongs to the ATPase epsilon chain family. In terms of assembly, F-type ATPases have 2 components, CF(1) - the catalytic core - and CF(0) - the membrane proton channel. CF(1) has five subunits: alpha(3), beta(3), gamma(1), delta(1), epsilon(1). CF(0) has three main subunits: a, b and c.

Its subcellular location is the plastid. It localises to the chloroplast thylakoid membrane. Produces ATP from ADP in the presence of a proton gradient across the membrane. The protein is ATP synthase epsilon chain, chloroplastic of Cyanidioschyzon merolae (strain NIES-3377 / 10D) (Unicellular red alga).